A 151-amino-acid polypeptide reads, in one-letter code: UPF0178 protein Suden_0449 (151 aa).

It belongs to the UPF0178 family.

This is UPF0178 protein Suden_0449 from Sulfurimonas denitrificans (strain ATCC 33889 / DSM 1251) (Thiomicrospira denitrificans (strain ATCC 33889 / DSM 1251)).